A 345-amino-acid polypeptide reads, in one-letter code: Phosphoribosylformylglycinamidine cyclo-ligase (345 aa).

The protein belongs to the AIR synthase family.

The protein localises to the cytoplasm. It carries out the reaction 2-formamido-N(1)-(5-O-phospho-beta-D-ribosyl)acetamidine + ATP = 5-amino-1-(5-phospho-beta-D-ribosyl)imidazole + ADP + phosphate + H(+). Its pathway is purine metabolism; IMP biosynthesis via de novo pathway; 5-amino-1-(5-phospho-D-ribosyl)imidazole from N(2)-formyl-N(1)-(5-phospho-D-ribosyl)glycinamide: step 2/2. The polypeptide is Phosphoribosylformylglycinamidine cyclo-ligase (Actinobacillus pleuropneumoniae serotype 5b (strain L20)).